Reading from the N-terminus, the 300-residue chain is Phospholipase A1 (300 aa).

Cys-4 and Cys-87 are oxidised to a cystine. Ser-137 serves as the catalytic Nucleophile. Asp-165 functions as the Charge relay system in the catalytic mechanism. Disulfide bonds link Cys-176–Cys-181 and Cys-219–Cys-227. Residue His-229 is the Charge relay system of the active site. 3 cysteine pairs are disulfide-bonded: Cys-244–Cys-268, Cys-245–Cys-293, and Cys-261–Cys-266.

Belongs to the AB hydrolase superfamily. Lipase family. As to expression, expressed by the venom gland.

It is found in the secreted. It carries out the reaction a 1,2-diacyl-sn-glycero-3-phosphocholine + H2O = a 2-acyl-sn-glycero-3-phosphocholine + a fatty acid + H(+). Its function is as follows. Catalyzes the hydrolysis of phosphatidylcholine with phospholipase A1 activity. May act as an allergen and induce hemolytic activity. The sequence is that of Phospholipase A1 from Vespula maculifrons (Eastern yellow jacket).